Here is a 552-residue protein sequence, read N- to C-terminus: CCR4-NOT transcription complex subunit 6 (552 aa).

LRR repeat units follow at residues 52 to 73, 75 to 96, 98 to 120, and 121 to 143; these read HLTALHLSDNSLSCIPSDIAKL, NLVYLDLSHNQIQSLPAELGNM, SLRELHLNYNQLRVLPFELGKLF, and QLQTLSLKGNPLTQDILNLCLEP. Positions 153–552 are nuclease domain; that stretch reads LLDNLSVSTE…VNGIHLPGRR (400 aa). Glu235 is a Mg(2+) binding site. 4 residues coordinate substrate: Glu235, Glu271, His356, and Pro361. Asp407 serves as a coordination point for Mg(2+). Catalysis depends on Asp407, which acts as the Proton donor/acceptor. Positions 409, 476, and 481 each coordinate substrate.

Belongs to the CCR4/nocturin family. Subunit of the CCR4-NOT core complex. Mg(2+) is required as a cofactor.

The protein resides in the cytoplasm. It localises to the nucleus. The enzyme catalyses Exonucleolytic cleavage of poly(A) to 5'-AMP.. Poly(A) nuclease involved in mRNA decay. Has 3'-5' RNase activity. The CCR4-NOT complex functions as a general transcription regulation complex. Enhances ligand-dependent transcriptional activity of nuclear hormone receptors. This is CCR4-NOT transcription complex subunit 6 (cnot6) from Xenopus laevis (African clawed frog).